A 932-amino-acid chain; its full sequence is Protocadherin gamma-A2 (932 aa).

Positions 1-28 (MAALQKLPHCRKLFLLCFLLATLWEARA) are cleaved as a signal peptide. Cadherin domains lie at 29–133 (GQIR…APRF), 134–242 (GVEE…APVF), 243–347 (TQPE…APEF), 348–452 (YMTS…APAF), 453–562 (SRTS…PPEI), and 570–682 (DGST…EPSA). Residues 29 to 692 (GQIRYSVREE…KPNDSDLTLY (664 aa)) lie on the Extracellular side of the membrane. N-linked (GlcNAc...) asparagine glycosylation is found at asparagine 419 and asparagine 545. N-linked (GlcNAc...) asparagine glycosylation occurs at asparagine 685. Residues 693–713 (LVVAVAAVSCVFLAFVIVLLA) traverse the membrane as a helical segment. The Cytoplasmic portion of the chain corresponds to 714–932 (HRLRRWHKSR…KKKSGKKEKK (219 aa)). Disordered regions lie at residues 798 to 841 (LEEE…WPNN) and 902 to 932 (ATLT…KEKK). Residues 806–841 (FSQQAPPNTDWRFSQAQRPGTSGSQNGDDTGTWPNN) show a composition bias toward polar residues. The span at 922–932 (NKKKSGKKEKK) shows a compositional bias: basic residues.

It is found in the cell membrane. Functionally, potential calcium-dependent cell-adhesion protein. May be involved in the establishment and maintenance of specific neuronal connections in the brain. In Pan troglodytes (Chimpanzee), this protein is Protocadherin gamma-A2 (PCDHGA2).